A 375-amino-acid chain; its full sequence is E3 ubiquitin-protein ligase RNF34 (375 aa).

The FYVE-type zinc-finger motif lies at 56–107 (EGPNIVCKACGLSFSVFRKKHVCCDCKKDFCSVCSVLQENLRRCSTCHLLQE). The SAP 1 domain maps to 115–134 (LMRLKVKDLRQYLILRNIPI). Serine 169 is modified (phosphoserine). Residues 202-250 (RTLGSGALAQEPSEIASANTEDDEDDDDDDDDDDDDDEENLEDRTPGLT) form a disordered region. A compositionally biased stretch (acidic residues) spans 221-242 (TEDDEDDDDDDDDDDDDDEENL). Residues serine 257 and serine 259 each carry the phosphoserine modification. In terms of domain architecture, SAP 2 spans 267–281 (VEGMSVRQLKEILAR). The segment at 328 to 363 (CRICMDAVIDCVLLECGHMVTCTKCGKRMSECPICR) adopts an RING-type zinc-finger fold.

As to quaternary structure, interacts with CASP8 and CASP10. Interacts with p53/TP53; involved in p53/TP53 ubiquitination. Interacts (via RING-type zinc finger) with MDM2; the interaction stabilizes MDM2. Interacts (via RING-type zinc finger) with PPARGC1A. Interacts with NOD1. In terms of processing, autoubiquitinated (in vitro). Proteolytically cleaved by caspases upon induction of apoptosis by TNF.

It is found in the cell membrane. Its subcellular location is the endomembrane system. The protein localises to the nucleus. The protein resides in the nucleus speckle. It localises to the cytoplasm. It is found in the cytosol. It catalyses the reaction S-ubiquitinyl-[E2 ubiquitin-conjugating enzyme]-L-cysteine + [acceptor protein]-L-lysine = [E2 ubiquitin-conjugating enzyme]-L-cysteine + N(6)-ubiquitinyl-[acceptor protein]-L-lysine.. It functions in the pathway protein modification; protein ubiquitination. Its function is as follows. E3 ubiquitin-protein ligase that regulates several biological processes through the ubiquitin-mediated proteasomal degradation of various target proteins. Ubiquitinates the caspases CASP8 and CASP10, promoting their proteasomal degradation, to negatively regulate cell death downstream of death domain receptors in the extrinsic pathway of apoptosis. May mediate 'Lys-48'-linked polyubiquitination of RIPK1 and its subsequent proteasomal degradation thereby indirectly regulating the tumor necrosis factor-mediated signaling pathway. Negatively regulates p53/TP53 through its direct ubiquitination and targeting to proteasomal degradation. Indirectly, may also negatively regulate p53/TP53 through ubiquitination and degradation of SFN. Mediates PPARGC1A proteasomal degradation probably through ubiquitination thereby indirectly regulating the metabolism of brown fat cells. Possibly involved in innate immunity, through 'Lys-48'-linked polyubiquitination of NOD1 and its subsequent proteasomal degradation. This chain is E3 ubiquitin-protein ligase RNF34 (RNF34), found in Bos taurus (Bovine).